Here is a 290-residue protein sequence, read N- to C-terminus: Light-independent protochlorophyllide reductase iron-sulfur ATP-binding protein (290 aa).

ATP contacts are provided by residues 10-15 (GIGKST) and K39. S14 provides a ligand contact to Mg(2+). Positions 95 and 129 each coordinate [4Fe-4S] cluster. 180 to 181 (NR) serves as a coordination point for ATP.

Belongs to the NifH/BchL/ChlL family. Homodimer. Protochlorophyllide reductase is composed of three subunits; ChlL, ChlN and ChlB. It depends on [4Fe-4S] cluster as a cofactor.

It is found in the plastid. It localises to the chloroplast. The catalysed reaction is chlorophyllide a + oxidized 2[4Fe-4S]-[ferredoxin] + 2 ADP + 2 phosphate = protochlorophyllide a + reduced 2[4Fe-4S]-[ferredoxin] + 2 ATP + 2 H2O. Its pathway is porphyrin-containing compound metabolism; chlorophyll biosynthesis (light-independent). In terms of biological role, component of the dark-operative protochlorophyllide reductase (DPOR) that uses Mg-ATP and reduced ferredoxin to reduce ring D of protochlorophyllide (Pchlide) to form chlorophyllide a (Chlide). This reaction is light-independent. The L component serves as a unique electron donor to the NB-component of the complex, and binds Mg-ATP. The chain is Light-independent protochlorophyllide reductase iron-sulfur ATP-binding protein from Pyropia yezoensis (Susabi-nori).